The sequence spans 395 residues: FAD-dependent monooxygenase cctM (395 aa).

The signal sequence occupies residues 1–23; that stretch reads MEPGTDVRRVLVIGAGAAGLLIA. Positions 37, 52, and 112 each coordinate FAD. N-linked (GlcNAc...) asparagine glycosylation is found at Asn138 and Asn298. Position 306 (Asp306) interacts with FAD.

It belongs to the paxM FAD-dependent monooxygenase family. Requires FAD as cofactor.

It functions in the pathway mycotoxin biosynthesis. FAD-dependent monooxygenase; part of the gene cluster that mediates the biosynthesis of the mycotoxin cyclochlorotine, a hepatotoxic and carcinogenic cyclic chlorinated pentapeptide. The function of cctM within the pathway, if any, remains undetermined. The NRPS cctN initially catalyzes the condensation of L-serine (Ser), Pro, L-2-aminobutyrate (2Abu), Ser, and beta-Phe in this order to produce isocyclotine. After the dichlorination of Pro2 catalyzed by cctP2 to produce isocyclochlorotine, the cctO-mediated transacylation of isocyclochlorotine can furnish cyclochlorotine. The subsequent hydroxylation of cyclochlorotine by cctR yields hydroxycyclochlorotine as the final product. CctP1 probably acts as a phenylalanine aminomutase and provides the uncommon building block beta-Phe. Furthermore, 2Abu can be synthesized from threonine by one of the threonine dehydratases and transaminases localized outside of the cluster. The functions of the remaining proteins encoded by the cluster, cctM and cctT, have not been identified yet. In Talaromyces islandicus (Penicillium islandicum), this protein is FAD-dependent monooxygenase cctM.